Here is a 475-residue protein sequence, read N- to C-terminus: Glutamyl-tRNA(Gln) amidotransferase subunit A (475 aa).

Catalysis depends on charge relay system residues lysine 69 and serine 144. Serine 168 acts as the Acyl-ester intermediate in catalysis.

Belongs to the amidase family. GatA subfamily. As to quaternary structure, heterotrimer of A, B and C subunits.

It carries out the reaction L-glutamyl-tRNA(Gln) + L-glutamine + ATP + H2O = L-glutaminyl-tRNA(Gln) + L-glutamate + ADP + phosphate + H(+). Functionally, allows the formation of correctly charged Gln-tRNA(Gln) through the transamidation of misacylated Glu-tRNA(Gln) in organisms which lack glutaminyl-tRNA synthetase. The reaction takes place in the presence of glutamine and ATP through an activated gamma-phospho-Glu-tRNA(Gln). The protein is Glutamyl-tRNA(Gln) amidotransferase subunit A of Methanosarcina barkeri (strain Fusaro / DSM 804).